The primary structure comprises 463 residues: L-seryl-tRNA(Sec) selenium transferase (463 aa).

Lys-295 bears the N6-(pyridoxal phosphate)lysine mark.

The protein belongs to the SelA family. Homodecamer; pentamer of dimers. Binds only one seryl-tRNA(Sec) per dimer. Pyridoxal 5'-phosphate serves as cofactor.

It is found in the cytoplasm. The catalysed reaction is L-seryl-tRNA(Sec) + selenophosphate + H(+) = L-selenocysteinyl-tRNA(Sec) + phosphate. The protein operates within aminoacyl-tRNA biosynthesis; selenocysteinyl-tRNA(Sec) biosynthesis; selenocysteinyl-tRNA(Sec) from L-seryl-tRNA(Sec) (bacterial route): step 1/1. Its function is as follows. Converts seryl-tRNA(Sec) to selenocysteinyl-tRNA(Sec) required for selenoprotein biosynthesis. This is L-seryl-tRNA(Sec) selenium transferase from Escherichia coli O127:H6 (strain E2348/69 / EPEC).